Reading from the N-terminus, the 324-residue chain is Protein ChrB (324 aa).

In terms of biological role, together with ChrA1, this protein reduces chromate accumulation and is essential for chromate resistance, possibly as a regulatory protein. This Cupriavidus metallidurans (strain ATCC 43123 / DSM 2839 / NBRC 102507 / CH34) (Ralstonia metallidurans) protein is Protein ChrB.